Reading from the N-terminus, the 135-residue chain is Putative pre-16S rRNA nuclease (135 aa).

This sequence belongs to the YqgF nuclease family.

It is found in the cytoplasm. Could be a nuclease involved in processing of the 5'-end of pre-16S rRNA. This is Putative pre-16S rRNA nuclease from Christiangramia forsetii (strain DSM 17595 / CGMCC 1.15422 / KT0803) (Gramella forsetii).